The following is a 367-amino-acid chain: Cystinosin (367 aa).

A signal peptide spans 1 to 22 (MRRNWLLILTLFLLMFIEKYES). At 23–125 (TVSLTAPPTV…LVIHSRIVSI (103 aa)) the chain is on the lumenal side. N-linked (GlcNAc...) asparagine glycosylation is found at Asn-36, Asn-51, Asn-66, Asn-84, Asn-104, and Asn-107. The region spanning 123 to 189 (VSIINQVIGW…LLWVPYIQEE (67 aa)) is the PQ-loop 1 domain. Residues 126–150 (INQVIGWIYFMAWSVSFYPQVIQNW) form a helical membrane-spanning segment. Residues 151-159 (RRKSVIGLS) lie on the Cytoplasmic side of the membrane. The helical transmembrane segment at 160 to 179 (FDFLALNLTGFVAYSVFNIG) threads the bilayer. L-cystine is bound at residue Asn-166. The Lumenal segment spans residues 180-202 (LLWVPYIQEEFLLKYPNGVNPVD). The chain crosses the membrane as a helical span at residues 203 to 225 (SNDAFFSLHAVALTLIVILQCCL). Asp-205 contacts H(+). Over 226–234 (YERGNQRVS) the chain is Cytoplasmic. The helical transmembrane segment at 235 to 257 (WPSIGFLVLAWLFVLVTMIVAAV) threads the bilayer. Topologically, residues 258–263 (GITTWL) are lumenal. The PQ-loop 2 domain maps to 263–328 (LQFLFCFSYI…QSYNNDQWTL (66 aa)). A helical membrane pass occupies residues 264–289 (QFLFCFSYIKLIITLIKYFPQAYMNF). Residues Lys-273, Lys-280, and Tyr-281 each coordinate L-cystine. Residues 290 to 298 (YYKSTKGWS) lie on the Cytoplasmic side of the membrane. Residues 299 to 308 (IGGVLLDFTG) traverse the membrane as a helical segment. An L-cystine-binding site is contributed by Asp-305. Asp-305 is a H(+) binding site. The Lumenal segment spans residues 309–331 (GSFSLLQMFLQSYNNDQWTLIFG). The helical transmembrane segment at 332 to 354 (DPTKFGLGVFTIFFDVVFFIQHF) threads the bilayer. Position 346 (Asp-346) interacts with H(+). Residues 355–367 (YLYRKKPGYDQLN) lie on the Cytoplasmic side of the membrane. The short motif at 362–366 (GYDQL) is the Lysosomal targeting motif element.

This sequence belongs to the cystinosin family. In terms of assembly, interacts with components of the V-ATPase complex. Interacts with components of the Ragulator complex. Interacts with RRAGA/RagA and RRAGC/RagC. Interacts with AP-3 complex subunit mu (AP3M1 or AP3M2).

It is found in the lysosome membrane. The protein resides in the melanosome membrane. It carries out the reaction L-cystine(out) + H(+)(out) = L-cystine(in) + H(+)(in). With respect to regulation, switches between a lumen- and a cytosol-open conformation: pH induces conformational changes and shifts the equilibrium to facilitate the transition between the lumen- and cytosol-open conformation, thereby promoting cystine transport. Protonation of specific aspartate residues (Asp-205, Asp-305 and Asp-346) favors the cytosol-open conformation. Its function is as follows. Cystine/H(+) symporter that mediates export of cystine, the oxidized dimer of cysteine, from lysosomes. Plays an important role in melanin synthesis by catalyzing cystine export from melanosomes, possibly by inhibiting pheomelanin synthesis. In addition to cystine export, also acts as a positive regulator of mTORC1 signaling in kidney proximal tubular cells, via interactions with components of the v-ATPase and Ragulator complexes. Also involved in small GTPase-regulated vesicle trafficking and lysosomal localization of LAMP2A, independently of cystine transporter activity. The protein is Cystinosin of Mus musculus (Mouse).